A 695-amino-acid chain; its full sequence is NADPH--cytochrome P450 reductase (695 aa).

The Lumenal portion of the chain corresponds to 1–8; sequence MAQLDTLD. A helical transmembrane segment spans residues 9-31; the sequence is LVVLVVLLVGSAAYFTKGTYWAV. Residues 32 to 695 lie on the Cytoplasmic side of the membrane; sequence PKDPYAASGP…SGSYQEDVWS (664 aa). Residues 66-221 enclose the Flavodoxin-like domain; that stretch reads CVIFYGSQTG…DFLAWKEPMW (156 aa). FMN is bound by residues 72 to 77, 123 to 126, 169 to 178, and Asp204; these read SQTGTA, ATYG, and LGNNTYEHYQ. Positions 277–538 constitute an FAD-binding FR-type domain; that stretch reads HNPFIAPIVE…HVRHSNFKLP (262 aa). Arg296 contacts NADP(+). FAD is bound by residues 451-454, 469-471, and 486-489; these read RYYS, TAV, and GVTT. Residues Thr552, 614–615, 620–624, and Glu656 contribute to the NADP(+) site; these read SR and KVYVQ. FAD is bound at residue Trp694.

The protein belongs to the NADPH--cytochrome P450 reductase family. It in the N-terminal section; belongs to the flavodoxin family. This sequence in the C-terminal section; belongs to the flavoprotein pyridine nucleotide cytochrome reductase family. FAD serves as cofactor. It depends on FMN as a cofactor.

The protein localises to the endoplasmic reticulum membrane. Its subcellular location is the mitochondrion outer membrane. It is found in the cell membrane. The catalysed reaction is 2 oxidized [cytochrome P450] + NADPH = 2 reduced [cytochrome P450] + NADP(+) + H(+). Functionally, this enzyme is required for electron transfer from NADP to cytochrome P450 in microsomes. It can also provide electron transfer to heme oxygenase and cytochrome B5. Involved in ergosterol biosynthesis. The sequence is that of NADPH--cytochrome P450 reductase from Aspergillus terreus (strain NIH 2624 / FGSC A1156).